Consider the following 178-residue polypeptide: MSRIGKLPITIPENVDINYNDSEITVKGKFGTLQTQIPTVIKITESDNILTVGLSEQTRSVRALHGLYRTLINNMVIGVSEQFEIILELKGVGYRAAVQNNEIILNLGYSHPVNIKIPNIISVEVVQNTTINLKSCDKELLGLFAANIRAWRQPEPYKGKGILYKGEQIIRKAGKSAK.

The protein belongs to the universal ribosomal protein uL6 family. As to quaternary structure, part of the 50S ribosomal subunit.

It is found in the plastid. Its subcellular location is the chloroplast. Binds 23S rRNA. The polypeptide is Large ribosomal subunit protein uL6c (rpl6) (Phaeodactylum tricornutum (strain CCAP 1055/1)).